The primary structure comprises 155 residues: Rhombotin-1 (155 aa).

LIM zinc-binding domains follow at residues 21–83 (KGCA…LFGT) and 85–147 (GNCA…GQLN).

The protein resides in the nucleus. Its function is as follows. May be involved in gene regulation within neural lineage cells potentially by direct DNA binding or by binding to other transcription factors. The protein is Rhombotin-1 of Danio rerio (Zebrafish).